Here is a 1475-residue protein sequence, read N- to C-terminus: Amylopullulanase (1475 aa).

The signal sequence occupies residues 1 to 31 (MFKRRALGFLLAFLLVFTAVFGSMPMEFAKA). 10 residues coordinate Ca(2+): Asp-245, Asn-247, Asp-285, Asp-340, Asn-398, Asp-400, Asn-403, Asp-404, Gly-449, and Asp-451. The substrate site is built by His-524 and Arg-627. Asp-629 (nucleophile) is an active-site residue. The active-site Proton donor is Glu-658. Residues 734-735 (HD), Asp-794, and Arg-798 contribute to the substrate site. 2 Fibronectin type-III domains span residues 928-1019 (APQP…PAFP) and 1164-1257 (TPTA…TPDI). The region spanning 1255-1362 (PDIIPIKVTF…VNDTVQRWRD (108 aa)) is the CBM20 domain.

The protein belongs to the glycosyl hydrolase 13 family. It depends on Ca(2+) as a cofactor.

The catalysed reaction is Endohydrolysis of (1-&gt;4)-alpha-D-glucosidic linkages in polysaccharides containing three or more (1-&gt;4)-alpha-linked D-glucose units.. It carries out the reaction Hydrolysis of (1-&gt;6)-alpha-D-glucosidic linkages in pullulan, amylopectin and glycogen, and in the alpha- and beta-limit dextrins of amylopectin and glycogen.. The sequence is that of Amylopullulanase (apu) from Thermoanaerobacter thermohydrosulfuricus (Clostridium thermohydrosulfuricum).